The chain runs to 327 residues: tRNA dimethylallyltransferase (327 aa).

Glycine 14–threonine 21 contacts ATP. A substrate-binding site is contributed by threonine 16–threonine 21. 2 interaction with substrate tRNA regions span residues aspartate 39–leucine 42 and glutamine 163–arginine 167.

The protein belongs to the IPP transferase family. Monomer. The cofactor is Mg(2+).

It catalyses the reaction adenosine(37) in tRNA + dimethylallyl diphosphate = N(6)-dimethylallyladenosine(37) in tRNA + diphosphate. Functionally, catalyzes the transfer of a dimethylallyl group onto the adenine at position 37 in tRNAs that read codons beginning with uridine, leading to the formation of N6-(dimethylallyl)adenosine (i(6)A). This Xanthomonas axonopodis pv. citri (strain 306) protein is tRNA dimethylallyltransferase.